The following is a 208-amino-acid chain: Guanylate kinase (208 aa).

Residues 5–184 form the Guanylate kinase-like domain; it reads GLLIVFSGPS…AAERVKCVIE (180 aa). 12–19 is a binding site for ATP; sequence GPSGVGKG.

The protein belongs to the guanylate kinase family.

It is found in the cytoplasm. The catalysed reaction is GMP + ATP = GDP + ADP. In terms of biological role, essential for recycling GMP and indirectly, cGMP. This Streptococcus pneumoniae serotype 4 (strain ATCC BAA-334 / TIGR4) protein is Guanylate kinase.